We begin with the raw amino-acid sequence, 217 residues long: Resolvase homolog YneB (217 aa).

A Resolvase/invertase-type recombinase catalytic domain is found at 2–147 (KALIYARVST…RGMKRAVKNG (146 aa)). Ser-10 serves as the catalytic O-(5'-phospho-DNA)-serine intermediate.

The protein belongs to the site-specific recombinase resolvase family.

The sequence is that of Resolvase homolog YneB (yneB) from Bacillus subtilis (strain 168).